A 143-amino-acid polypeptide reads, in one-letter code: Anti-sigma F factor (143 aa).

The protein belongs to the anti-sigma-factor family.

It catalyses the reaction L-seryl-[protein] + ATP = O-phospho-L-seryl-[protein] + ADP + H(+). The catalysed reaction is L-threonyl-[protein] + ATP = O-phospho-L-threonyl-[protein] + ADP + H(+). Functionally, binds to sigma F and blocks its ability to form an RNA polymerase holoenzyme (E-sigma F). Phosphorylates SpoIIAA on a serine residue. This phosphorylation may enable SpoIIAA to act as an anti-anti-sigma factor that counteracts SpoIIAB and thus releases sigma F from inhibition. This is Anti-sigma F factor from Clostridium novyi (strain NT).